A 451-amino-acid chain; its full sequence is UDP-N-acetylmuramoylalanine--D-glutamate ligase (451 aa).

118 to 124 (GTKGKST) is a binding site for ATP.

It belongs to the MurCDEF family.

Its subcellular location is the cytoplasm. The enzyme catalyses UDP-N-acetyl-alpha-D-muramoyl-L-alanine + D-glutamate + ATP = UDP-N-acetyl-alpha-D-muramoyl-L-alanyl-D-glutamate + ADP + phosphate + H(+). Its pathway is cell wall biogenesis; peptidoglycan biosynthesis. In terms of biological role, cell wall formation. Catalyzes the addition of glutamate to the nucleotide precursor UDP-N-acetylmuramoyl-L-alanine (UMA). The protein is UDP-N-acetylmuramoylalanine--D-glutamate ligase of Borreliella afzelii (strain PKo) (Borrelia afzelii).